Here is a 181-residue protein sequence, read N- to C-terminus: Inner membrane-spanning protein YciB (181 aa).

A run of 5 helical transmembrane segments spans residues 10–30, 50–70, 80–100, 118–138, and 148–168; these read LVIF…GALI, MHLI…VFHD, IIYS…KSIL, VTWY…YVAF, and FKVF…VFYL.

It belongs to the YciB family.

The protein localises to the cell inner membrane. In terms of biological role, plays a role in cell envelope biogenesis, maintenance of cell envelope integrity and membrane homeostasis. This is Inner membrane-spanning protein YciB from Shewanella baltica (strain OS223).